The sequence spans 302 residues: Fluoroacetate dehalogenase (302 aa).

Residues 32 to 270 (PPLLLLHGFP…LDVWRKWASD (239 aa)) form the AB hydrolase-1 domain. Asp-110 (nucleophile) is an active-site residue. Fluoroacetate-binding residues include Arg-111, Arg-114, His-155, Trp-156, and Tyr-219. His-280 (proton acceptor) is an active-site residue.

This sequence belongs to the AB hydrolase superfamily. Epoxide hydrolase family. In terms of assembly, homodimer.

The enzyme catalyses a haloacetate + H2O = a halide anion + glycolate + H(+). It carries out the reaction fluoroacetate + H2O = fluoride + glycolate + H(+). It catalyses the reaction chloroacetate + H2O = glycolate + chloride + H(+). Its function is as follows. Catalyzes the hydrolytic defluorination of fluoroacetate to produce glycolate. Has lower activity towards chloroacetate and bromoacetate. In Rhodopseudomonas palustris (strain ATCC BAA-98 / CGA009), this protein is Fluoroacetate dehalogenase.